The primary structure comprises 119 residues: Phosphoribosyl-AMP cyclohydrolase (119 aa).

Aspartate 77 is a Mg(2+) binding site. Position 78 (cysteine 78) interacts with Zn(2+). Residues aspartate 79 and aspartate 81 each coordinate Mg(2+). 2 residues coordinate Zn(2+): cysteine 94 and cysteine 101.

It belongs to the PRA-CH family. In terms of assembly, homodimer. It depends on Mg(2+) as a cofactor. Requires Zn(2+) as cofactor.

The protein resides in the cytoplasm. It catalyses the reaction 1-(5-phospho-beta-D-ribosyl)-5'-AMP + H2O = 1-(5-phospho-beta-D-ribosyl)-5-[(5-phospho-beta-D-ribosylamino)methylideneamino]imidazole-4-carboxamide. Its pathway is amino-acid biosynthesis; L-histidine biosynthesis; L-histidine from 5-phospho-alpha-D-ribose 1-diphosphate: step 3/9. Its function is as follows. Catalyzes the hydrolysis of the adenine ring of phosphoribosyl-AMP. The sequence is that of Phosphoribosyl-AMP cyclohydrolase from Cereibacter sphaeroides (strain ATCC 17023 / DSM 158 / JCM 6121 / CCUG 31486 / LMG 2827 / NBRC 12203 / NCIMB 8253 / ATH 2.4.1.) (Rhodobacter sphaeroides).